The chain runs to 424 residues: Probable methyltransferase EP424R (424 aa).

Residues 103–315 (QIVTNAWLKM…TYIVGKNRLR (213 aa)) enclose the Adrift-type SAM-dependent 2'-O-MTase domain. Gly135 and Asp228 together coordinate S-adenosyl-L-methionine. Lys268 acts as the Proton acceptor in catalysis.

The protein resides in the virion. The sequence is that of Probable methyltransferase EP424R from Ornithodoros (relapsing fever ticks).